The chain runs to 179 residues: Riboflavin kinase (179 aa).

G61–R66 provides a ligand contact to CDP. Mg(2+) is bound by residues T90 and N92. Positions 147 and 155 each coordinate FMN. Residue V160–R163 participates in CDP binding.

This sequence belongs to the archaeal riboflavin kinase family. Mg(2+) is required as a cofactor.

It carries out the reaction riboflavin + CTP = CDP + FMN + H(+). The protein operates within cofactor biosynthesis; FMN biosynthesis; FMN from riboflavin (CTP route): step 1/1. Catalyzes the CTP-dependent phosphorylation of riboflavin (vitamin B2) to form flavin mononucleotide (FMN). In Ignicoccus hospitalis (strain KIN4/I / DSM 18386 / JCM 14125), this protein is Riboflavin kinase.